Reading from the N-terminus, the 756-residue chain is Inactive carboxypeptidase-like protein X2 (756 aa).

Positions 1–25 (MSRPGTATPALALVLLAVTLAGVGA) are cleaved as a signal peptide. Residues 51-131 (EPELETFSPP…DHSVRVARED (81 aa)) are disordered. Positions 68–78 (EWERRPQEPRP) are enriched in basic and acidic residues. The segment covering 79 to 90 (PKRATKPKKAPK) has biased composition (basic residues). A compositionally biased stretch (basic and acidic residues) spans 113–131 (KSSEKAANDDHSVRVARED). The 160-residue stretch at 134–293 (ESCPPLGLET…ICMRMEILGC (160 aa)) folds into the F5/8 type C domain. An intrachain disulfide couples cysteine 136 to cysteine 293. Residues asparagine 231, asparagine 241, asparagine 281, asparagine 337, and asparagine 491 are each glycosylated (N-linked (GlcNAc...) asparagine). In terms of domain architecture, Peptidase M14 spans 317–640 (KHHNYKEMRQ…ESLIVFMEQV (324 aa)).

The protein belongs to the peptidase M14 family.

Its subcellular location is the secreted. May be involved in cell-cell interactions. This Homo sapiens (Human) protein is Inactive carboxypeptidase-like protein X2 (CPXM2).